Here is a 135-residue protein sequence, read N- to C-terminus: Putative pre-16S rRNA nuclease (135 aa).

Belongs to the YqgF nuclease family.

Its subcellular location is the cytoplasm. Its function is as follows. Could be a nuclease involved in processing of the 5'-end of pre-16S rRNA. This is Putative pre-16S rRNA nuclease from Buchnera aphidicola subsp. Acyrthosiphon pisum (strain 5A).